The primary structure comprises 35 residues: Cupiennin-1a (35 aa).

Glutamic acid 1-amide is present on E35.

This sequence belongs to the cationic peptide 04 (cupiennin) family. 01 subfamily. As to quaternary structure, monomer. Interacts with CSTX-1 (AC P81694), CSTX-9 (AC P58604), and CSTX-13 (AC P83919). In terms of tissue distribution, expressed by the venom gland.

It is found in the secreted. Has antimicrobial activity against B.subtilis, E.coli, E.faecalis, P.denitrificans, P.aeruginosa, P.putida, S.aureus, and S.epidermidis. Shows insecticidal and hemolytic activities. Probably acts by disturbing membrane function with its amphipathic structure. Synergistically increases the insecticidal activity of CSTX-1 (AC P81694), CSTX-9 (AC P58604), and CSTX-13 (AC P83919) by up to 65%. Also inhibits the formation of nitric oxide by neuronal nitric oxide synthase. The sequence is that of Cupiennin-1a from Cupiennius salei (American wandering spider).